Consider the following 253-residue polypeptide: Porin thermoregulatory protein EnvY (253 aa).

In terms of domain architecture, HTH araC/xylS-type spans 149–246; that stretch reads DSVCRIIQSD…GLTPLNYLAK (98 aa). DNA-binding regions (H-T-H motif) lie at residues 166 to 187 and 213 to 236; these read RIVA…KNEN and ITQV…KAFY.

Influences the temperature-dependent expression of several E.coli envelope proteins, most notably the porins OmpF and OmpC and the lambda receptor, LamB. In Escherichia coli (strain K12), this protein is Porin thermoregulatory protein EnvY (envY).